The chain runs to 637 residues: 1-deoxy-D-xylulose-5-phosphate synthase (637 aa).

Thiamine diphosphate is bound by residues H73 and 113 to 115; that span reads SHA. D145 lines the Mg(2+) pocket. Thiamine diphosphate contacts are provided by residues 146–147, N175, Y286, and E367; that span reads GA. Residue N175 coordinates Mg(2+).

The protein belongs to the transketolase family. DXPS subfamily. As to quaternary structure, homodimer. Requires Mg(2+) as cofactor. The cofactor is thiamine diphosphate.

The catalysed reaction is D-glyceraldehyde 3-phosphate + pyruvate + H(+) = 1-deoxy-D-xylulose 5-phosphate + CO2. The protein operates within metabolic intermediate biosynthesis; 1-deoxy-D-xylulose 5-phosphate biosynthesis; 1-deoxy-D-xylulose 5-phosphate from D-glyceraldehyde 3-phosphate and pyruvate: step 1/1. Catalyzes the acyloin condensation reaction between C atoms 2 and 3 of pyruvate and glyceraldehyde 3-phosphate to yield 1-deoxy-D-xylulose-5-phosphate (DXP). This Thermobifida fusca (strain YX) protein is 1-deoxy-D-xylulose-5-phosphate synthase.